Reading from the N-terminus, the 377-residue chain is Succinyl-diaminopimelate desuccinylase (377 aa).

A Zn(2+)-binding site is contributed by histidine 66. The active site involves aspartate 68. Aspartate 99 provides a ligand contact to Zn(2+). Catalysis depends on glutamate 133, which acts as the Proton acceptor. Residues glutamate 134, glutamate 162, and histidine 348 each coordinate Zn(2+).

Belongs to the peptidase M20A family. DapE subfamily. Homodimer. Zn(2+) serves as cofactor. Requires Co(2+) as cofactor.

It catalyses the reaction N-succinyl-(2S,6S)-2,6-diaminopimelate + H2O = (2S,6S)-2,6-diaminopimelate + succinate. It functions in the pathway amino-acid biosynthesis; L-lysine biosynthesis via DAP pathway; LL-2,6-diaminopimelate from (S)-tetrahydrodipicolinate (succinylase route): step 3/3. Functionally, catalyzes the hydrolysis of N-succinyl-L,L-diaminopimelic acid (SDAP), forming succinate and LL-2,6-diaminopimelate (DAP), an intermediate involved in the bacterial biosynthesis of lysine and meso-diaminopimelic acid, an essential component of bacterial cell walls. The sequence is that of Succinyl-diaminopimelate desuccinylase from Methylococcus capsulatus (strain ATCC 33009 / NCIMB 11132 / Bath).